Here is a 252-residue protein sequence, read N- to C-terminus: CLAVATA3/ESR (CLE)-related protein 4A-2 (252 aa).

Residues 1–21 (MAKNAMLCLLILRVVLALAFA) form the signal peptide. The tract at residues 21 to 83 (ATNKKGDEEP…SNQLPNNNWM (63 aa)) is required for secretion from the host cytoplasm to the host apoplasm. The N-linked (GlcNAc...) asparagine glycan is linked to asparagine 32. The interval 116–252 (RKTGMHSQRH…APAGPDPIHH (137 aa)) is disordered. 4 stretches are compositionally biased toward basic and acidic residues: residues 125-137 (HHEE…EKRV), 144-179 (PIHH…EKRV), 186-200 (PIHH…EKRA), and 207-242 (PTHH…EKRG). The A-1 repeat unit spans residues 127-135 (EETTLEQEK). Residues 127–219 (EETTLEQEKR…HEETTLEQEK (93 aa)) form a 6 X approximate repeat A region. The stretch at 136–147 (RVAGAGPDPIHH) is one CLE-1 repeat. The segment at 136–252 (RVAGAGPDPI…APAGPDPIHH (117 aa)) is 6 X approximate repeat CLE. The A-2 repeat unit spans residues 148–156 (QDTTLEQEK). The stretch at 157–168 (RAVPAGPDPKHH) is one CLE-2 repeat. One copy of the A-3 repeat lies at 169–177 (EETTLEQEK). One copy of the CLE-3 repeat lies at 178 to 189 (RVAGAGPDPIHH). An A-4 repeat occupies 190–198 (QDTTLEQEK). One copy of the CLE-4 repeat lies at 199-210 (RAVPAGPDPTHH). One copy of the A-5 repeat lies at 211–219 (EETTLEQEK). The CLE-5 repeat unit spans residues 220-231 (RAVPAGPDPKHH). An A-6 repeat occupies 232 to 240 (EETTFEQEK). The stretch at 241 to 252 (RGAPAGPDPIHH) is one CLE-6 repeat.

It belongs to the CLV3/ESR signal peptide family. In terms of tissue distribution, highly expressed exclusively within the dorsal esophageal gland cell during syncytium formation in host plants.

The protein localises to the secreted. Its subcellular location is the host cytoplasm. It localises to the host extracellular space. It is found in the extracellular space. The protein resides in the apoplast. Its function is as follows. Mimics host plant CLE extracellular signal peptides that regulate cell fate. May play a role in the differentiation or division of feeding cells (syncytia) induced in plant roots during infection. The sequence is that of CLAVATA3/ESR (CLE)-related protein 4A-2 (CLE-4A-2) from Globodera rostochiensis (Golden nematode worm).